Here is a 123-residue protein sequence, read N- to C-terminus: Chondroitin proteoglycan 8 (123 aa).

The N-terminal stretch at Met-1–Ala-16 is a signal peptide. Residues Ser-32–Glu-123 are disordered. The span at Arg-38–Thr-60 shows a compositional bias: basic and acidic residues. O-linked (Xyl...) (chondroitin sulfate) serine glycans are attached at residues Ser-63 and Ser-65. The span at Glu-74–Glu-84 shows a compositional bias: basic and acidic residues. O-linked (Xyl...) (chondroitin sulfate) serine glycans are attached at residues Ser-87, Ser-93, and Ser-114.

This Caenorhabditis briggsae protein is Chondroitin proteoglycan 8 (cpg-8).